The sequence spans 426 residues: Mitochondrial distribution and morphology protein 12 (426 aa).

Residues 1 to 426 (MSIEVDWKTA…VFPSFWTFLI (426 aa)) enclose the SMP-LTD domain. 3 disordered regions span residues 88–147 (AHGN…GTPG), 185–264 (WTDH…FRFP), and 346–370 (ADDQ…SPKR). Over residues 96 to 109 (THSELNEPPYRDEV) the composition is skewed to basic and acidic residues. Over residues 216-236 (SSNPTSRPSTSSTLPSHPSGS) the composition is skewed to low complexity. Basic and acidic residues-rich tracts occupy residues 244 to 264 (SHPE…FRFP) and 349 to 360 (QETRDKDDHPRS).

Belongs to the MDM12 family. Component of the ER-mitochondria encounter structure (ERMES) or MDM complex, composed of mmm1, mdm10, mdm12 and mdm34. A mmm1 homodimer associates with one molecule of mdm12 on each side in a pairwise head-to-tail manner, and the SMP-LTD domains of mmm1 and mdm12 generate a continuous hydrophobic tunnel for phospholipid trafficking.

Its subcellular location is the mitochondrion outer membrane. It is found in the endoplasmic reticulum membrane. In terms of biological role, component of the ERMES/MDM complex, which serves as a molecular tether to connect the endoplasmic reticulum (ER) and mitochondria. Components of this complex are involved in the control of mitochondrial shape and protein biogenesis, and function in nonvesicular lipid trafficking between the ER and mitochondria. Mdm12 is required for the interaction of the ER-resident membrane protein mmm1 and the outer mitochondrial membrane-resident beta-barrel protein mdm10. The mdm12-mmm1 subcomplex functions in the major beta-barrel assembly pathway that is responsible for biogenesis of all mitochondrial outer membrane beta-barrel proteins, and acts in a late step after the SAM complex. The mdm10-mdm12-mmm1 subcomplex further acts in the TOM40-specific pathway after the action of the mdm12-mmm1 complex. Essential for establishing and maintaining the structure of mitochondria and maintenance of mtDNA nucleoids. This chain is Mitochondrial distribution and morphology protein 12, found in Aspergillus terreus (strain NIH 2624 / FGSC A1156).